Here is a 483-residue protein sequence, read N- to C-terminus: Betaine aldehyde dehydrogenase (483 aa).

Residues isoleucine 27 and aspartate 93 each contribute to the K(+) site. 149–151 contributes to the NAD(+) binding site; that stretch reads GAW. Residue lysine 161 is the Charge relay system of the active site. 175–178 provides a ligand contact to NAD(+); it reads KPSE. Valine 179 is a binding site for K(+). 228–231 contributes to the NAD(+) binding site; the sequence is SVPT. Valine 243 is a K(+) binding site. Residue glutamate 249 is the Proton acceptor of the active site. Residues glycine 251, cysteine 283, and glutamate 380 each coordinate NAD(+). Cysteine 283 (nucleophile) is an active-site residue. Cysteine sulfenic acid (-SOH) is present on cysteine 283. Residues lysine 450 and glycine 453 each contribute to the K(+) site. Glutamate 457 acts as the Charge relay system in catalysis.

The protein belongs to the aldehyde dehydrogenase family. In terms of assembly, dimer of dimers. K(+) is required as a cofactor.

It catalyses the reaction betaine aldehyde + NAD(+) + H2O = glycine betaine + NADH + 2 H(+). It functions in the pathway amine and polyamine biosynthesis; betaine biosynthesis via choline pathway; betaine from betaine aldehyde: step 1/1. In terms of biological role, involved in the biosynthesis of the osmoprotectant glycine betaine. Catalyzes the irreversible oxidation of betaine aldehyde to the corresponding acid. This is Betaine aldehyde dehydrogenase from Cereibacter sphaeroides (strain ATCC 17029 / ATH 2.4.9) (Rhodobacter sphaeroides).